A 61-amino-acid chain; its full sequence is Small ribosomal subunit protein uS14B (61 aa).

Zn(2+) is bound by residues C24, C27, C40, and C43.

The protein belongs to the universal ribosomal protein uS14 family. Zinc-binding uS14 subfamily. As to quaternary structure, part of the 30S ribosomal subunit. Contacts proteins S3 and S10. It depends on Zn(2+) as a cofactor.

Functionally, binds 16S rRNA, required for the assembly of 30S particles and may also be responsible for determining the conformation of the 16S rRNA at the A site. The chain is Small ribosomal subunit protein uS14B from Myxococcus xanthus (strain DK1622).